A 140-amino-acid polypeptide reads, in one-letter code: Histone H2B (140 aa).

The segment covering 1 to 10 (MPPKAAEKKP) has biased composition (basic and acidic residues). Residues 1–48 (MPPKAAEKKPSTGGKAPAGKAPAEKKEAGKKTAAAATGDKKKRGKTRK) form a disordered region. K8 and K9 each carry N6-acetyllysine; alternate. Glycyl lysine isopeptide (Lys-Gly) (interchain with G-Cter in SUMO); alternate cross-links involve residues K8 and K9. The segment covering 11 to 21 (STGGKAPAGKA) has biased composition (low complexity). At K15 the chain carries N6-acetyllysine. At K25 the chain carries N6-acetyllysine; alternate. K25 participates in a covalent cross-link: Glycyl lysine isopeptide (Lys-Gly) (interchain with G-Cter in SUMO); alternate. A Glycyl lysine isopeptide (Lys-Gly) (interchain with G-Cter in SUMO) cross-link involves residue K26. A Glycyl lysine isopeptide (Lys-Gly) (interchain with G-Cter in ubiquitin) cross-link involves residue K134.

The protein belongs to the histone H2B family. As to quaternary structure, the nucleosome is a histone octamer containing two molecules each of H2A, H2B, H3 and H4 assembled in one H3-H4 heterotetramer and two H2A-H2B heterodimers. The octamer wraps approximately 147 bp of DNA. Post-translationally, monoubiquitinated by the ubc2-bre1 complex to form H2BK123ub1. H2BK123ub1 gives a specific tag for epigenetic transcriptional activation and is also prerequisite for H3K4me and H3K79me formation. H2BK123ub1 also modulates the formation of double-strand breaks during meiosis and is a prerequisite for DNA-damage checkpoint activation. In terms of processing, acetylated by gcn5 to form H2BK11ac and H2BK16ac. H2BK16ac can also be formed by esa1. Acetylation of N-terminal lysines and particularly formation of H2BK11acK16ac has a positive effect on transcription. Sumoylation to form H2BK6su or H2BK7su, and probably also H2BK16su or H2BK17su, occurs preferentially near the telomeres and represses gene transcription.

The protein localises to the nucleus. It localises to the chromosome. Its function is as follows. Core component of nucleosome. Nucleosomes wrap and compact DNA into chromatin, limiting DNA accessibility to the cellular machineries which require DNA as a template. Histones thereby play a central role in transcription regulation, DNA repair, DNA replication and chromosomal stability. DNA accessibility is regulated via a complex set of post-translational modifications of histones, also called histone code, and nucleosome remodeling. This Neosartorya fischeri (strain ATCC 1020 / DSM 3700 / CBS 544.65 / FGSC A1164 / JCM 1740 / NRRL 181 / WB 181) (Aspergillus fischerianus) protein is Histone H2B (htb1).